Consider the following 484-residue polypeptide: Serine hydroxymethyltransferase, cytosolic (484 aa).

The residue at position 2 (alanine 2) is an N-acetylalanine. Deamidated asparagine; alternate is present on asparagine 6. The isoaspartyl glycine isopeptide (Asn-Gly); alternate cross-link spans 6–7 (NG). Cysteine 204 serves as the catalytic Nucleophile. Histidine 256 serves as the catalytic Proton donor. The residue at position 257 (lysine 257) is an N6-(pyridoxal phosphate)lysine.

It belongs to the SHMT family. As to quaternary structure, homotetramer. Identified in complex with ABRAXAS2 and the other subunits of the BRISC complex, at least composed of ABRAXAS2, BRCC3/BRCC36, BABAM2 and BABAM1/NBA1. Pyridoxal 5'-phosphate serves as cofactor. In terms of processing, deamidation of asparagine produces alternatively aspartate or isoaspartate, which in turn can be converted to aspartate through carboxylmethylation/demethylation.

The protein localises to the cytoplasm. It carries out the reaction (6R)-5,10-methylene-5,6,7,8-tetrahydrofolate + glycine + H2O = (6S)-5,6,7,8-tetrahydrofolate + L-serine. It functions in the pathway one-carbon metabolism; tetrahydrofolate interconversion. Functionally, interconversion of serine and glycine. The sequence is that of Serine hydroxymethyltransferase, cytosolic (SHMT1) from Oryctolagus cuniculus (Rabbit).